A 592-amino-acid chain; its full sequence is MEGSDFLLAGVLFLFAAVAAVPLASRLGIGAVLGYLLAGIAIGPWGLGFISDVDEILHFSELGVVFLMFIIGLELNPSKLWQLRRSIFGVGAAQVLLSAALLAGLLMLTDFAWQAAVVGGIGLAMSSTAMALQLMREKGMNRSESGQLGFSVLLFQDLAVIPALALVPLLAGSADEHFDWMKIGMKVLAFVGMLIGGRYLLRPVFRFIAASGVREVFTAATLLLVLGSALFMDALGLSMALGTFIAGVLLAESEYRHELETAIDPFKGLLLGLFFISVGMSLNLGVLYTHLLWVVISVVVLVAVKILVLYLLARLYGVRSSERMQFAGVLSQGGEFAFVLFSTASSQRLFQGDQMALLLVTVTLSMMTTPLLMKLVDKWLSRQFNGPEEEDEKPWVNDDKPQVIVVGFGRFGQVIGRLLMANKMRITVLERDISAVNLMRKYGYKVYYGDATQVDLLRSAGAEAAESIVITCNEPEDTMKLVEICQQHFPHLHILARARGRVEAHELLQAGVTQFSRETFSSALELGRKTLVTLGMHPHQAQRAQLHFRRLDMRMLRELIPMHADTVQISRAREARRELEEIFQREMQQERR.

Helical transmembrane passes span 4-24 (SDFL…VPLA), 29-49 (IGAV…GLGF), 55-75 (EILH…GLEL), 87-107 (IFGV…GLLM), 115-135 (AAVV…LQLM), 152-172 (VLLF…LLAG), 177-197 (HFDW…LIGG), 207-227 (FIAA…LVLG), 230-250 (LFMD…GVLL), 268-288 (GLLL…GVLY), 291-311 (LLWV…VLYL), 324-344 (MQFA…FSTA), and 356-376 (ALLL…MKLV). One can recognise an RCK N-terminal domain in the interval 400-519 (KPQVIVVGFG…AGVTQFSRET (120 aa)).

Belongs to the monovalent cation:proton antiporter 2 (CPA2) transporter (TC 2.A.37) family. KefB subfamily. As to quaternary structure, interacts with the regulatory subunit KefG.

It is found in the cell inner membrane. Pore-forming subunit of a potassium efflux system that confers protection against electrophiles. Catalyzes K(+)/H(+) antiport. The polypeptide is Glutathione-regulated potassium-efflux system protein KefB (Escherichia coli O157:H7).